A 192-amino-acid chain; its full sequence is Pyridoxal 5'-phosphate synthase subunit PdxT (192 aa).

Residue 53–55 (GES) participates in L-glutamine binding. The active-site Nucleophile is the Cys-82. L-glutamine is bound by residues Arg-108 and 134–135 (IR). Catalysis depends on charge relay system residues His-170 and Glu-172.

The protein belongs to the glutaminase PdxT/SNO family. As to quaternary structure, in the presence of PdxS, forms a dodecamer of heterodimers. Only shows activity in the heterodimer.

The catalysed reaction is aldehydo-D-ribose 5-phosphate + D-glyceraldehyde 3-phosphate + L-glutamine = pyridoxal 5'-phosphate + L-glutamate + phosphate + 3 H2O + H(+). It catalyses the reaction L-glutamine + H2O = L-glutamate + NH4(+). Its pathway is cofactor biosynthesis; pyridoxal 5'-phosphate biosynthesis. Functionally, catalyzes the hydrolysis of glutamine to glutamate and ammonia as part of the biosynthesis of pyridoxal 5'-phosphate. The resulting ammonia molecule is channeled to the active site of PdxS. This Methanosphaera stadtmanae (strain ATCC 43021 / DSM 3091 / JCM 11832 / MCB-3) protein is Pyridoxal 5'-phosphate synthase subunit PdxT.